Here is a 219-residue protein sequence, read N- to C-terminus: Germin-like protein subfamily 2 member 1 (219 aa).

An N-terminal signal peptide occupies residues 1-21 (MASPTLTLLLLLTTVSFFISS). A disulfide bond links cysteine 32 and cysteine 47. Residues 61-209 (QGLAKPGLTN…AFQTSPGTVK (149 aa)) form the Cupin type-1 domain. Residue asparagine 70 is glycosylated (N-linked (GlcNAc...) asparagine). Residues histidine 109, histidine 111, glutamate 116, and histidine 155 each coordinate Mn(2+).

This sequence belongs to the germin family. In terms of assembly, oligomer (believed to be a pentamer but probably hexamer).

The protein resides in the secreted. It is found in the extracellular space. The protein localises to the apoplast. In terms of biological role, may play a role in plant defense. Probably has no oxalate oxidase activity even if the active site is conserved. The chain is Germin-like protein subfamily 2 member 1 (GLP4) from Arabidopsis thaliana (Mouse-ear cress).